The chain runs to 1005 residues: DNA-directed RNA polymerase subunit beta (1005 aa).

This sequence belongs to the RNA polymerase beta chain family. In plastids the minimal PEP RNA polymerase catalytic core is composed of four subunits: alpha, beta, beta', and beta''. When a (nuclear-encoded) sigma factor is associated with the core the holoenzyme is formed, which can initiate transcription (Potential).

Its subcellular location is the plastid. It localises to the apicoplast. The catalysed reaction is RNA(n) + a ribonucleoside 5'-triphosphate = RNA(n+1) + diphosphate. In terms of biological role, DNA-dependent RNA polymerase catalyzes the transcription of DNA into RNA using the four ribonucleoside triphosphates as substrates. This is DNA-directed RNA polymerase subunit beta (rpoB) from Theileria parva (East coast fever infection agent).